The following is a 353-amino-acid chain: Photosystem II protein D1 (353 aa).

Thr2 carries the N-acetylthreonine modification. Thr2 is modified (phosphothreonine). The next 3 helical transmembrane spans lie at 29-46 (YIGWFGVLMIPTLLTATA), 118-133 (HFLLGVACYMGREWEL), and 142-156 (WIAVAYSAPVAAAAA). Residue His118 participates in chlorophyll a binding. Tyr126 contacts pheophytin a. [CaMn4O5] cluster is bound by residues Asp170 and Glu189. Residues 197–218 (FHMLGVAGVFGGSLFSAMHGSL) form a helical membrane-spanning segment. His198 serves as a coordination point for chlorophyll a. A quinone is bound by residues His215 and 264 to 265 (SF). His215 contacts Fe cation. Fe cation is bound at residue His272. Residues 274–288 (FLAAWPVVGIWFTAL) form a helical membrane-spanning segment. Residues His332, Glu333, Asp342, and Ala344 each contribute to the [CaMn4O5] cluster site. The propeptide occupies 345-353 (SVEAPSVNG).

The protein belongs to the reaction center PufL/M/PsbA/D family. In terms of assembly, PSII is composed of 1 copy each of membrane proteins PsbA, PsbB, PsbC, PsbD, PsbE, PsbF, PsbH, PsbI, PsbJ, PsbK, PsbL, PsbM, PsbT, PsbX, PsbY, PsbZ, Psb30/Ycf12, at least 3 peripheral proteins of the oxygen-evolving complex and a large number of cofactors. It forms dimeric complexes. The cofactor is The D1/D2 heterodimer binds P680, chlorophylls that are the primary electron donor of PSII, and subsequent electron acceptors. It shares a non-heme iron and each subunit binds pheophytin, quinone, additional chlorophylls, carotenoids and lipids. D1 provides most of the ligands for the Mn4-Ca-O5 cluster of the oxygen-evolving complex (OEC). There is also a Cl(-1) ion associated with D1 and D2, which is required for oxygen evolution. The PSII complex binds additional chlorophylls, carotenoids and specific lipids.. Post-translationally, tyr-161 forms a radical intermediate that is referred to as redox-active TyrZ, YZ or Y-Z. In terms of processing, C-terminally processed by CTPA; processing is essential to allow assembly of the oxygen-evolving complex and thus photosynthetic growth.

It localises to the plastid. The protein localises to the chloroplast thylakoid membrane. The catalysed reaction is 2 a plastoquinone + 4 hnu + 2 H2O = 2 a plastoquinol + O2. Photosystem II (PSII) is a light-driven water:plastoquinone oxidoreductase that uses light energy to abstract electrons from H(2)O, generating O(2) and a proton gradient subsequently used for ATP formation. It consists of a core antenna complex that captures photons, and an electron transfer chain that converts photonic excitation into a charge separation. The D1/D2 (PsbA/PsbD) reaction center heterodimer binds P680, the primary electron donor of PSII as well as several subsequent electron acceptors. The polypeptide is Photosystem II protein D1 (Huperzia lucidula (Shining clubmoss)).